A 117-amino-acid chain; its full sequence is Large ribosomal subunit protein uL22 (117 aa).

This sequence belongs to the universal ribosomal protein uL22 family. Part of the 50S ribosomal subunit.

Its function is as follows. This protein binds specifically to 23S rRNA; its binding is stimulated by other ribosomal proteins, e.g. L4, L17, and L20. It is important during the early stages of 50S assembly. It makes multiple contacts with different domains of the 23S rRNA in the assembled 50S subunit and ribosome. In terms of biological role, the globular domain of the protein is located near the polypeptide exit tunnel on the outside of the subunit, while an extended beta-hairpin is found that lines the wall of the exit tunnel in the center of the 70S ribosome. This chain is Large ribosomal subunit protein uL22, found in Lactobacillus delbrueckii subsp. bulgaricus (strain ATCC 11842 / DSM 20081 / BCRC 10696 / JCM 1002 / NBRC 13953 / NCIMB 11778 / NCTC 12712 / WDCM 00102 / Lb 14).